Here is a 171-residue protein sequence, read N- to C-terminus: MNHFELFGLPNQFELDGGLLSLQFRELQKRFHPDNFATSSERDRLLSIQKAAQINDAYQTLKNPVSRAEYILSEQGHDIRGEQTTMQDPMFLMQQMELREELESLPSSSDPESALFDFAENVTAMRKSQLVQLQELLKNEAWIEAAQSVRKLKFIEKLNQEVEQLEEKLLG.

The region spanning 2–74 (NHFELFGLPN…VSRAEYILSE (73 aa)) is the J domain.

It belongs to the HscB family. Interacts with HscA and stimulates its ATPase activity.

Co-chaperone involved in the maturation of iron-sulfur cluster-containing proteins. Seems to help targeting proteins to be folded toward HscA. This chain is Co-chaperone protein HscB homolog, found in Aliivibrio fischeri (strain ATCC 700601 / ES114) (Vibrio fischeri).